The following is a 326-amino-acid chain: MEMO1 family protein TTHA0924 (326 aa).

This sequence belongs to the MEMO1 family.

The sequence is that of MEMO1 family protein TTHA0924 from Thermus thermophilus (strain ATCC 27634 / DSM 579 / HB8).